Consider the following 647-residue polypeptide: 1-deoxy-D-xylulose-5-phosphate synthase (647 aa).

Thiamine diphosphate is bound by residues His-72 and 113–115 (GHA). Mg(2+) is bound at residue Asp-144. Thiamine diphosphate contacts are provided by residues 145–146 (GA), Asn-174, Tyr-287, and Glu-370. Mg(2+) is bound at residue Asn-174.

The protein belongs to the transketolase family. DXPS subfamily. Homodimer. It depends on Mg(2+) as a cofactor. Thiamine diphosphate is required as a cofactor.

It catalyses the reaction D-glyceraldehyde 3-phosphate + pyruvate + H(+) = 1-deoxy-D-xylulose 5-phosphate + CO2. It functions in the pathway metabolic intermediate biosynthesis; 1-deoxy-D-xylulose 5-phosphate biosynthesis; 1-deoxy-D-xylulose 5-phosphate from D-glyceraldehyde 3-phosphate and pyruvate: step 1/1. Functionally, catalyzes the acyloin condensation reaction between C atoms 2 and 3 of pyruvate and glyceraldehyde 3-phosphate to yield 1-deoxy-D-xylulose-5-phosphate (DXP). This Synechococcus sp. (strain WH7803) protein is 1-deoxy-D-xylulose-5-phosphate synthase.